The chain runs to 1875 residues: MEMALRPQSLLCPRSRLKVVIRPASSASGGGLAQYFLMTRRYTGSRIVRCMVSSSDCPNRKAKRTISLHTEVASSRGYAPRIAAESSIQEREHINSDEETFDTYNRLLRNESTEWKKLDTTEVDLSQDVSSSSMRKVDATDEAKLDILEDDLPRNLLNGVTMGEVDMLDEAGAEDDVFEVDLSALHNSTVGKMDAVNEVGTENDLFEVDLSALHSAAVGKVDVVDGAKAKEDLFEMDSLALHSVTMGKVDAINAAGAEGDKFEVDLSALASNNSMIEAVNVMDEAKAIEDTLEVDLSGNATSSSTYGEVKFEVDSLGNTSSTVMYGPADGAYEPRSDEVTFKVDSSENASNNVMYGRADVVDESWADEGIFEVDFFTNASSGAEYGKVDVVDEAKTDDFTFEIDSLEKDSNNKMHGKAHMVDEAWDDEAIFEVDLFGNASSIPIYGEVNVLDEARADDGKFEVDLLGNTSSNSTHEEVDVVDEAQTGEATFEVDLLGNALSSAIYKEVPVMGGAQDDEVDVDFSINASITETEKEADAVDEARVEDETFDMDLVGKQISIDSMNDDVVEEGTKHHRYPMLSSAFIEVKTIHETPVSLKPELMSVVMDQEQDKPISSVYQQEGSIFNLHAENQSTVDFHEREQMAITFDKQKESVAKLSKEDQQTAGLPEQNMSFDGVHRKSQSIIGLPFQHQSIVSSPEKYRSIVGFHGQNQSIISSHKQDKSIVGVPKKIQSIVGSTKHDDSIVGFRKQDRSIVSVPEQKQSIVGFHKQDLSIVAVSEQNLSIVAIPRESQSKQISIVRRHDPLHLKEVETKDRDGISKKSGGDDDLPHMLFEEELSQVEDVARAIAYKKQHEVDVISLTPDIQESPQDNIDPQELRRMLQELADQNCSMGNKLFVFPEAVKANSTIDVYLNRNLSALANEPDVHIKGAFNSWRWRPFTERLHKSELSGDWWSCKLHIPKEAYRLDFVFFNGRLVYDNNDSNDFVLQVESTMDEDSFEEFLVEEKKRELERVATEEAERRRHAEEQQRMGEQRAAEQAAREQAKKEIELKKNKLQNLLSSARTHVDNLWHIEPSTYRQGDTVRLYYNRNSRPLMHSTEIWMHGGCNSWTDGLSIVERLVECDDENGDWWYANVHIPEKAFVLDWVFADGPPGNARNYDNNGRQDFHAILPNAMTNEEYWVEEENCIYTRLLHEIREREEAIKIKVEKRAKMKSEMKEKTMRMFLLSQKHIVYTEPLEIRAGTTVDVLYNPSNTVLNGKPEVWFRWSFNRWMHPSGVLPPKKMVKTEDGCHLKATVSVPSDAYMMDFVFSESEEGGIYDNRNGTDYHIPVSGSNAKEPPIHIVHIAVEMAPIAKVGGLADVVTSLSRAIQELGHHVEVILPKYNFMNQSNVKNLHVRQSFSLGGTEIKVWFGLVEDLSVYFLEPQNGMFGGGWVYGGNDAGRFGLFCQSALEFLLQSGSSPHIIHCHDWSSAPVAWLYKEHYAESRLATARIIFTIHNLEFGAHFIGKAMTYCDKATTVSHTYSKEVAGHGAIAPHRGKFYGILNGIDPDIWDPYTDNFIPMHYTSENVVEGKNAAKRALQQRFGLQQTDVPIVGIITRLTAQKGIHLIKHALHRTLERNGQVVLLGSAPDPRIQSDFCRLADSLHGENHGRVRLCLTYDEPLSHLIYAGSDFILVPSIFEPCGLTQLVAMRYGSIPIVRKTGGLYDTVFDVDHDKDRARVLGLEPNGFSFDGADCNGVDYALNRQQSLLGLKPAVGSTPSAKGSWSKTGPGTGLPWTTLNCTIQLTNFEAPIQRWQEKASIGRYYKLNETWLKVKIFYLSCRYKLTQTWFKVKIFYLSYTYICRIKTLYSMHKQLWEYVSAMFPILSFNYEYLI.

A chloroplast-targeting transit peptide spans 1 to 49; it reads MEMALRPQSLLCPRSRLKVVIRPASSASGGGLAQYFLMTRRYTGSRIVR. Positions 1007 to 1065 form a coiled coil; sequence KRELERVATEEAERRRHAEEQQRMGEQRAAEQAAREQAKKEIELKKNKLQNLLSSARTH. The interval 1014 to 1043 is disordered; the sequence is ATEEAERRRHAEEQQRMGEQRAAEQAAREQ.

This sequence belongs to the glycosyltransferase 1 family. Bacterial/plant glycogen synthase subfamily. As to expression, expressed in the endosperm.

The protein localises to the plastid. The protein resides in the chloroplast. It is found in the amyloplast. The enzyme catalyses [(1-&gt;4)-alpha-D-glucosyl](n) + ADP-alpha-D-glucose = [(1-&gt;4)-alpha-D-glucosyl](n+1) + ADP + H(+). It functions in the pathway glycan biosynthesis; starch biosynthesis. In terms of biological role, involved in starch synthesis in endosperm amyloplasts. Plays an important role in the elongation of amylopectin B chains. The sequence is that of Soluble starch synthase 3a, chloroplastic/amyloplastic from Oryza sativa subsp. japonica (Rice).